The following is a 365-amino-acid chain: uncharacterized protein (365 aa).

At M1 to K133 the chain is on the cytoplasmic side. Residues L134 to T154 form a helical membrane-spanning segment. At Y155 to Y169 the chain is on the extracellular side. The chain crosses the membrane as a helical span at residues L170–F190. Over K191–E365 the chain is Cytoplasmic.

The protein resides in the membrane. This is an uncharacterized protein from Saccharomyces cerevisiae (strain ATCC 204508 / S288c) (Baker's yeast).